Reading from the N-terminus, the 192-residue chain is Ribosome maturation factor RimP (192 aa).

Belongs to the RimP family.

The protein localises to the cytoplasm. Functionally, required for maturation of 30S ribosomal subunits. This chain is Ribosome maturation factor RimP, found in Delftia acidovorans (strain DSM 14801 / SPH-1).